A 273-amino-acid polypeptide reads, in one-letter code: Putative pyruvate, phosphate dikinase regulatory protein (273 aa).

ADP is bound at residue 149–156 (GPSRTSKT).

The protein belongs to the pyruvate, phosphate/water dikinase regulatory protein family. PDRP subfamily.

It carries out the reaction N(tele)-phospho-L-histidyl/L-threonyl-[pyruvate, phosphate dikinase] + ADP = N(tele)-phospho-L-histidyl/O-phospho-L-threonyl-[pyruvate, phosphate dikinase] + AMP + H(+). The enzyme catalyses N(tele)-phospho-L-histidyl/O-phospho-L-threonyl-[pyruvate, phosphate dikinase] + phosphate + H(+) = N(tele)-phospho-L-histidyl/L-threonyl-[pyruvate, phosphate dikinase] + diphosphate. In terms of biological role, bifunctional serine/threonine kinase and phosphorylase involved in the regulation of the pyruvate, phosphate dikinase (PPDK) by catalyzing its phosphorylation/dephosphorylation. The protein is Putative pyruvate, phosphate dikinase regulatory protein of Rickettsia prowazekii (strain Madrid E).